The primary structure comprises 444 residues: MAKKRDRIVNTQPFISDDASVASSRKRSKVPKTHQKQEKLIEAGMSEKIMKQALAQQKEVADEENAERNPSSAAFAVAGAATAGEEQKILEEEEDDIDDFDGTFENQSQFDKQEEINEDDEKLFESFLNKNAPPQRTLTDIIIKKLKDKDADLAEEERPDPKMDPAITKLYKGVGKFMSEYTVGKLPKAFKLVTSMEHWEDVLYLTEPEKWSPNALYQATRIFASNLKDRQVQRFYNYVLLPRVREDIRKHKKLHFALYQALKKSLYKPSAFNQGILFPLCKSGTCNLREAVIIGSILEKCSIPMLHSCVALNRLAEMDYCGTTSYFIKVLLEKKYCMPYRVLDALVAHFMRFVDDIRVMPVIWHQSLLTFVQRYKYEILKEDKEHLQTLLQRQKHHLVTPEILRELKDSRNRGEKEDPMVDNFAPVPAKEDRFDIPEVPMEED.

2 disordered regions span residues 1–37 (MAKKRDRIVNTQPFISDDASVASSRKRSKVPKTHQKQ) and 53–85 (ALAQQKEVADEENAERNPSSAAFAVAGAATAGE). The segment covering 24–34 (SRKRSKVPKTH) has biased composition (basic residues). A compositionally biased stretch (low complexity) spans 73 to 84 (AAFAVAGAATAG).

It belongs to the bystin family. In terms of assembly, component of the 40S pre-ribosome. Highly expressed in flowers and at lower levels in roots, hypocotyls, stems, leaves, siliques and seeds.

The protein resides in the nucleus. It localises to the nucleolus. It is found in the nucleoplasm. Its function is as follows. Essential protein required during embryogenesis and pollen development. Required for processing of 20S pre-rRNA precursor and biogenesis of 40S ribosomal subunits. In Arabidopsis thaliana (Mouse-ear cress), this protein is Bystin.